The following is a 1190-amino-acid chain: DNA-directed RNA polymerase subunit beta (1190 aa).

Positions 1155 to 1190 (ENFDDDDDHAPDAIMVDVKPAEREEAGEEKDAVTKE) are disordered. Basic and acidic residues predominate over residues 1173-1190 (KPAEREEAGEEKDAVTKE).

It belongs to the RNA polymerase beta chain family. As to quaternary structure, the RNAP catalytic core consists of 2 alpha, 1 beta, 1 beta' and 1 omega subunit. When a sigma factor is associated with the core the holoenzyme is formed, which can initiate transcription.

It catalyses the reaction RNA(n) + a ribonucleoside 5'-triphosphate = RNA(n+1) + diphosphate. Functionally, DNA-dependent RNA polymerase catalyzes the transcription of DNA into RNA using the four ribonucleoside triphosphates as substrates. This is DNA-directed RNA polymerase subunit beta from Geobacillus kaustophilus (strain HTA426).